The following is a 226-amino-acid chain: MKIAVVVFPGSNCDVDLYEALHSVCHADVEYVSHRQKSLAGFDAVMLPGGFSYGDYLRAGAIARFTNIMPAIIKMANEGKPVFGTCNGFQILTEAGLLPGGLKRNDSQRFVCKTVPLEVVNSHTLFTSHYQDHERIALPIAHADGSYYADEKTLDELEANNQVVFRYATENPNGSLHNIAGITNKHGNVLGMMPHPERAVETILGSTDGLRLFESLLENGRIKVEA.

In terms of domain architecture, Glutamine amidotransferase type-1 spans Lys-2–Ala-226. Residue Cys-86 is the Nucleophile of the active site. Active-site residues include His-195 and Glu-197.

As to quaternary structure, part of the FGAM synthase complex composed of 1 PurL, 1 PurQ and 2 PurS subunits.

The protein localises to the cytoplasm. The enzyme catalyses N(2)-formyl-N(1)-(5-phospho-beta-D-ribosyl)glycinamide + L-glutamine + ATP + H2O = 2-formamido-N(1)-(5-O-phospho-beta-D-ribosyl)acetamidine + L-glutamate + ADP + phosphate + H(+). It carries out the reaction L-glutamine + H2O = L-glutamate + NH4(+). The protein operates within purine metabolism; IMP biosynthesis via de novo pathway; 5-amino-1-(5-phospho-D-ribosyl)imidazole from N(2)-formyl-N(1)-(5-phospho-D-ribosyl)glycinamide: step 1/2. Part of the phosphoribosylformylglycinamidine synthase complex involved in the purines biosynthetic pathway. Catalyzes the ATP-dependent conversion of formylglycinamide ribonucleotide (FGAR) and glutamine to yield formylglycinamidine ribonucleotide (FGAM) and glutamate. The FGAM synthase complex is composed of three subunits. PurQ produces an ammonia molecule by converting glutamine to glutamate. PurL transfers the ammonia molecule to FGAR to form FGAM in an ATP-dependent manner. PurS interacts with PurQ and PurL and is thought to assist in the transfer of the ammonia molecule from PurQ to PurL. The protein is Phosphoribosylformylglycinamidine synthase subunit PurQ of Limosilactobacillus reuteri (strain DSM 20016) (Lactobacillus reuteri).